A 188-amino-acid polypeptide reads, in one-letter code: Elongation factor P (188 aa).

Lys34 bears the N6-(3,6-diaminohexanoyl)-5-hydroxylysine mark.

Belongs to the elongation factor P family. Is beta-lysylated on the epsilon-amino group of Lys-34 by the combined action of EpmA and EpmB, and then hydroxylated on the C5 position of the same residue by EpmC. Lysylation is critical for the stimulatory effect of EF-P on peptide-bond formation. The lysylation moiety would extend toward the peptidyltransferase center and stabilize the terminal 3-CCA end of the tRNA. The hydroxylation of the C5 position on Lys-34 would allow additional potential stabilizing hydrogen-bond interactions with the P-tRNA.

The protein localises to the cytoplasm. It participates in protein biosynthesis; polypeptide chain elongation. Involved in peptide bond synthesis. Alleviates ribosome stalling that occurs when 3 or more consecutive Pro residues or the sequence PPG is present in a protein, possibly by augmenting the peptidyl transferase activity of the ribosome. Modification of Lys-34 is required for alleviation. The sequence is that of Elongation factor P from Shigella boydii serotype 18 (strain CDC 3083-94 / BS512).